The primary structure comprises 647 residues: DNA mismatch repair protein MutL (647 aa).

It belongs to the DNA mismatch repair MutL/HexB family.

Functionally, this protein is involved in the repair of mismatches in DNA. It is required for dam-dependent methyl-directed DNA mismatch repair. May act as a 'molecular matchmaker', a protein that promotes the formation of a stable complex between two or more DNA-binding proteins in an ATP-dependent manner without itself being part of a final effector complex. The sequence is that of DNA mismatch repair protein MutL from Bacillus cereus (strain 03BB102).